Reading from the N-terminus, the 574-residue chain is Intraflagellar transport protein 56 homolog (574 aa).

3 TPR repeats span residues A20–D52, D57–P90, and L151–L184.

It belongs to the IFT56 family. In terms of assembly, component of the IFT complex B composed of at least che-2, che-13, dyf-1, dyf-3, dyf-6, dyf-11, dyf-13, ift-20, ift-74, ift-81, ifta-2, osm-1, osm-5 and osm-6.

It is found in the cell projection. Its subcellular location is the cilium. Its function is as follows. Component of the intraflagellar transport (IFT) complex B required for transport of proteins in the motile cilium. May be required for ciliary entrance and transport of specific ciliary cargo proteins such as che-3 which are related to motility. The chain is Intraflagellar transport protein 56 homolog from Caenorhabditis elegans.